The primary structure comprises 198 residues: Imidazoleglycerol-phosphate dehydratase (198 aa).

The protein belongs to the imidazoleglycerol-phosphate dehydratase family.

Its subcellular location is the cytoplasm. It catalyses the reaction D-erythro-1-(imidazol-4-yl)glycerol 3-phosphate = 3-(imidazol-4-yl)-2-oxopropyl phosphate + H2O. It participates in amino-acid biosynthesis; L-histidine biosynthesis; L-histidine from 5-phospho-alpha-D-ribose 1-diphosphate: step 6/9. The sequence is that of Imidazoleglycerol-phosphate dehydratase from Magnetococcus marinus (strain ATCC BAA-1437 / JCM 17883 / MC-1).